The following is a 1735-amino-acid chain: Glutamine and serine-rich protein 1 (1735 aa).

Methionine 1 carries the N-acetylmethionine modification. The span at 267 to 297 (AIPSSGYPPSTTKIKSCSTEQPLTSTKTPKP) shows a compositional bias: polar residues. Disordered stretches follow at residues 267–301 (AIPS…QSII), 414–440 (TRDL…VSQT), 479–518 (SRAQ…FLPA), and 533–561 (LQNN…SKQE). Over residues 417–440 (LSSVSQSQSYSSGHSQGLSPVSQT) the composition is skewed to low complexity. A phosphoserine mark is found at serine 586, serine 615, and serine 886. Threonine 949 carries the phosphothreonine modification. Residues 964 to 1033 (GPSHEVQEQS…EFTLGGDDSG (70 aa)) are disordered. Over residues 971–985 (EQSSGPFKKQSATNL) the composition is skewed to polar residues. A Phosphoserine modification is found at serine 987. The segment covering 997–1024 (STLNNNRNQEFVSSSRSISGENATSESE) has biased composition (polar residues). Glycyl lysine isopeptide (Lys-Gly) (interchain with G-Cter in SUMO2) cross-links involve residues lysine 1058 and lysine 1083. 2 disordered regions span residues 1073 to 1132 (KKRA…EKMR) and 1178 to 1217 (RPGT…DKVD). Over residues 1120 to 1132 (SCHDGYQHQEKMR) the composition is skewed to basic and acidic residues. Residues serine 1211, serine 1230, serine 1231, and serine 1239 each carry the phosphoserine modification. Residues 1256–1286 (TSDKKKKTEALQVATTSPTANTTGTATTSST) are disordered. Low complexity predominate over residues 1269-1286 (ATTSPTANTTGTATTSST). Threonine 1341 bears the Phosphothreonine mark. Serine 1348 bears the Phosphoserine mark. The segment at 1441 to 1532 (VCSKKPRNKP…SSDDEEFEPP (92 aa)) is disordered. Polar residues predominate over residues 1449-1478 (KPSQTIRTVQAKPSSSSKTSDPLASKTTTT). Residues 1492–1508 (VKAEPPPKKRKKWKEEF) show a composition bias toward basic and acidic residues.

Interacts with TET1.

The protein localises to the chromosome. In terms of biological role, plays an essential role in the protection and maintenance of transcriptional and developmental programs. Protects many bivalent promoters and poised enhancers from hypermethylation, showing a marked preference for these regulatory elements over other types of promoters or enhancers. Mechanistically, cooperates with TET1 and binds to DNA in a common complex to inhibit the binding of DNMT3A/3B and therefore de novo methylation. The sequence is that of Glutamine and serine-rich protein 1 (QSER1) from Homo sapiens (Human).